A 429-amino-acid polypeptide reads, in one-letter code: Adenylosuccinate synthetase (429 aa).

GTP-binding positions include 12–18 (GDEGKGK) and 40–42 (GHT). D13 acts as the Proton acceptor in catalysis. D13 and G40 together coordinate Mg(2+). Residues 13–16 (DEGK), 38–41 (NAGH), T129, R143, Q223, T238, and R302 contribute to the IMP site. H41 serves as the catalytic Proton donor. 298-304 (TVTGRPR) serves as a coordination point for substrate. GTP contacts are provided by residues R304, 330-332 (KLD), and 412-414 (STS).

Belongs to the adenylosuccinate synthetase family. Homodimer. Mg(2+) is required as a cofactor.

The protein localises to the cytoplasm. The catalysed reaction is IMP + L-aspartate + GTP = N(6)-(1,2-dicarboxyethyl)-AMP + GDP + phosphate + 2 H(+). It functions in the pathway purine metabolism; AMP biosynthesis via de novo pathway; AMP from IMP: step 1/2. Its function is as follows. Plays an important role in the de novo pathway of purine nucleotide biosynthesis. Catalyzes the first committed step in the biosynthesis of AMP from IMP. The sequence is that of Adenylosuccinate synthetase from Paramagnetospirillum magneticum (strain ATCC 700264 / AMB-1) (Magnetospirillum magneticum).